The chain runs to 92 residues: Small ribosomal subunit protein uS19 (92 aa).

The protein belongs to the universal ribosomal protein uS19 family.

Functionally, protein S19 forms a complex with S13 that binds strongly to the 16S ribosomal RNA. This is Small ribosomal subunit protein uS19 from Borrelia hermsii (strain HS1 / DAH).